A 947-amino-acid chain; its full sequence is Cell adhesion molecule CEACAM5 (947 aa).

The signal sequence occupies residues Met-1–Ala-34. Ig-like V-type domains lie at Gln-35–Ser-132, Ser-166–Tyr-259, Pro-270–Asn-378, Arg-392–Asp-498, Gln-509–Asn-615, Gly-642–Gln-733, and Asp-746–His-851. N-linked (GlcNAc...) asparagine glycosylation is found at Asn-57, Asn-103, Asn-110, Asn-207, Asn-224, Asn-341, Asn-461, Asn-472, Asn-578, Asn-698, Asn-709, Asn-816, and Asn-823. Positions Pro-859–Ala-943 constitute an Ig-like C2-type 1 domain. A disulfide bond links Cys-878 and Cys-926.

It belongs to the immunoglobulin superfamily. CEA family. As to quaternary structure, homodimer.

Its subcellular location is the cell membrane. It localises to the apical cell membrane. The protein resides in the cell surface. In terms of biological role, cell surface glycoprotein that plays a role in cell adhesion, intracellular signaling and tumor progression. Mediates homophilic and heterophilic cell adhesion with other carcinoembryonic antigen-related cell adhesion molecules, such as CEACAM6. Plays a role as an oncogene by promoting tumor progression; induces resistance to anoikis of colorectal carcinoma cells. The chain is Cell adhesion molecule CEACAM5 from Mus musculus (Mouse).